The primary structure comprises 337 residues: tRNA N6-adenosine threonylcarbamoyltransferase (337 aa).

The Fe cation site is built by H111 and H115. Residues L134 to G138, D167, G180, and N272 each bind substrate. A Fe cation-binding site is contributed by D300.

The protein belongs to the KAE1 / TsaD family. It depends on Fe(2+) as a cofactor.

Its subcellular location is the cytoplasm. The catalysed reaction is L-threonylcarbamoyladenylate + adenosine(37) in tRNA = N(6)-L-threonylcarbamoyladenosine(37) in tRNA + AMP + H(+). Functionally, required for the formation of a threonylcarbamoyl group on adenosine at position 37 (t(6)A37) in tRNAs that read codons beginning with adenine. Is involved in the transfer of the threonylcarbamoyl moiety of threonylcarbamoyl-AMP (TC-AMP) to the N6 group of A37, together with TsaE and TsaB. TsaD likely plays a direct catalytic role in this reaction. The polypeptide is tRNA N6-adenosine threonylcarbamoyltransferase (Shewanella woodyi (strain ATCC 51908 / MS32)).